A 67-amino-acid polypeptide reads, in one-letter code: Gallinacin-6 (67 aa).

An N-terminal signal peptide occupies residues 1–19 (MRILYLLLSVLFVVLQGVA). The propeptide occupies 20-25 (GQPYFS). 3 disulfides stabilise this stretch: Cys-31-Cys-60, Cys-38-Cys-53, and Cys-43-Cys-61.

It belongs to the beta-defensin family. In terms of tissue distribution, expressed in bone marrow, testis, ovary, lung and trachea. Expressed in the ovarian stroma, but not in the ovarian follicles.

It localises to the secreted. The protein resides in the cytoplasmic granule. Functionally, has bactericidal activity. Potent activity against S.typhimurium and S.entiriditis. The protein is Gallinacin-6 (GAL6) of Gallus gallus (Chicken).